A 467-amino-acid polypeptide reads, in one-letter code: MAAAARARVTHLLRHLQSTACQCPTHSHTYSQVPGLSPSGKTTDYAFEMAVSNIRYGAGVTKEVGMDLQNMGAKNVCLMTDKNLSQLPPVQIVMDSLSKNGISFQVYDNVRVEPTDGSFMDAIEFAKKGAFDAYVAVGGGSTMDTCKAANLYACSPHSEFLDYVNAPIGKGKPVTVPLKPLIAVPTTSGTGSETTGVAIFDYEHLKVKTGIASRAIKPTLGLVDPLHTLHMPCQVVANSGFDVLCHALESYTAIPYSMRSPCPSNPIQRPAYQGSNPISDIWAVHALRIVAKYLKRAVRNPDDLEARSSMHLASAFAGIGFGNAGVHLCHGMSYPISGLVKTYKAKEYNVDHPLVPHGLSVVLTSPAVFTFTAQMFPERHLETAEILGANIRTAKIQDAGPVLADALRKFLFDLNVDDGLAALGYSKDDIPSLVKGTLPQERVTKLAPRAQSEEDLSALFEASMKLY.

Lysine 445 carries the post-translational modification N6-acetyllysine. Position 452 is a phosphoserine (serine 452).

The protein belongs to the iron-containing alcohol dehydrogenase family. Hydroxyacid-oxoacid transhydrogenase subfamily. In terms of tissue distribution, expressed in kidney and liver.

It is found in the mitochondrion. It catalyses the reaction (S)-3-hydroxybutanoate + 2-oxoglutarate = (R)-2-hydroxyglutarate + acetoacetate. The enzyme catalyses 4-hydroxybutanoate + 2-oxoglutarate = (R)-2-hydroxyglutarate + succinate semialdehyde. Functionally, catalyzes the cofactor-independent reversible oxidation of gamma-hydroxybutyrate (GHB) to succinic semialdehyde (SSA) coupled to reduction of 2-ketoglutarate (2-KG) to D-2-hydroxyglutarate (D-2-HG). L-3-hydroxybutyrate (L-3-OHB) is also a substrate for HOT when using 2-KG as hydrogen acceptor, resulting in the formation of D-2-HG. This chain is Hydroxyacid-oxoacid transhydrogenase, mitochondrial (Adhfe1), found in Rattus norvegicus (Rat).